The primary structure comprises 303 residues: D-alanine--D-alanine ligase (303 aa).

One can recognise an ATP-grasp domain in the interval 102-298 (RILLAAAGLP…YPELCDWMVR (197 aa)). An ATP-binding site is contributed by 128-181 (PLPAPYVIKPVAEGSSVGVEIVRTGDNRRAEIARTWRFGKEALVESFIPGRELT). Residues D251, E265, and N267 each coordinate Mg(2+).

It belongs to the D-alanine--D-alanine ligase family. The cofactor is Mg(2+). Mn(2+) serves as cofactor.

The protein resides in the cytoplasm. The catalysed reaction is 2 D-alanine + ATP = D-alanyl-D-alanine + ADP + phosphate + H(+). The protein operates within cell wall biogenesis; peptidoglycan biosynthesis. Cell wall formation. The polypeptide is D-alanine--D-alanine ligase (Gluconobacter oxydans (strain 621H) (Gluconobacter suboxydans)).